The following is a 341-amino-acid chain: N-acetyl-gamma-glutamyl-phosphate reductase (341 aa).

Residue Cys-147 is part of the active site.

It belongs to the NAGSA dehydrogenase family. Type 1 subfamily.

It is found in the cytoplasm. It catalyses the reaction N-acetyl-L-glutamate 5-semialdehyde + phosphate + NADP(+) = N-acetyl-L-glutamyl 5-phosphate + NADPH + H(+). It functions in the pathway amino-acid biosynthesis; L-arginine biosynthesis; N(2)-acetyl-L-ornithine from L-glutamate: step 3/4. In terms of biological role, catalyzes the NADPH-dependent reduction of N-acetyl-5-glutamyl phosphate to yield N-acetyl-L-glutamate 5-semialdehyde. The chain is N-acetyl-gamma-glutamyl-phosphate reductase from Dehalococcoides mccartyi (strain ATCC BAA-2266 / KCTC 15142 / 195) (Dehalococcoides ethenogenes (strain 195)).